The sequence spans 176 residues: ATP synthase subunit b (176 aa).

A helical transmembrane segment spans residues 18 to 38 (GVEWGTVIVTVITFAILLALL).

The protein belongs to the ATPase B chain family. F-type ATPases have 2 components, F(1) - the catalytic core - and F(0) - the membrane proton channel. F(1) has five subunits: alpha(3), beta(3), gamma(1), delta(1), epsilon(1). F(0) has three main subunits: a(1), b(2) and c(10-14). The alpha and beta chains form an alternating ring which encloses part of the gamma chain. F(1) is attached to F(0) by a central stalk formed by the gamma and epsilon chains, while a peripheral stalk is formed by the delta and b chains.

The protein localises to the cell membrane. Its function is as follows. F(1)F(0) ATP synthase produces ATP from ADP in the presence of a proton or sodium gradient. F-type ATPases consist of two structural domains, F(1) containing the extramembraneous catalytic core and F(0) containing the membrane proton channel, linked together by a central stalk and a peripheral stalk. During catalysis, ATP synthesis in the catalytic domain of F(1) is coupled via a rotary mechanism of the central stalk subunits to proton translocation. Functionally, component of the F(0) channel, it forms part of the peripheral stalk, linking F(1) to F(0). This is ATP synthase subunit b from Staphylococcus haemolyticus (strain JCSC1435).